A 594-amino-acid chain; its full sequence is ATP-dependent RNA helicase DBP9 (594 aa).

The Q motif motif lies at 17–45 (TTFEAFHLDSRLLQAIKNIGFQYPTLIQS). Positions 49 to 233 (PLALQQKRDI…QKFCRSPAIL (185 aa)) constitute a Helicase ATP-binding domain. 62–69 (AATGSGKT) contacts ATP. Residues 179-182 (DEVD) carry the DEAD box motif. A Helicase C-terminal domain is found at 246-476 (KLLQYYVKVS…PYKFDQKQVE (231 aa)). Disordered stretches follow at residues 339–377 (EDDE…QVKK) and 558–594 (TKVK…KNFK). Residues 345 to 366 (EGHNTENQEEKSLEGEPENDKK) are compositionally biased toward basic and acidic residues. Over residues 567 to 584 (NAKKRHSHKKGRVSKPKN) the composition is skewed to basic residues. Positions 585–594 (GKVDPLKNFK) are enriched in basic and acidic residues.

Belongs to the DEAD box helicase family. DDX56/DBP9 subfamily. Interacts with DBP6.

The protein resides in the nucleus. It is found in the nucleolus. The catalysed reaction is ATP + H2O = ADP + phosphate + H(+). In terms of biological role, ATP-binding RNA helicase involved in the biogenesis of 60S ribosomal subunits and is required for the normal formation of 25S and 5.8S rRNAs. This chain is ATP-dependent RNA helicase DBP9 (DBP9), found in Saccharomyces cerevisiae (strain YJM789) (Baker's yeast).